The following is a 266-amino-acid chain: Calpain small subunit 1 (266 aa).

Met-1 is modified (N-acetylmethionine). Ser-6 is modified (phosphoserine). In terms of domain architecture, EF-hand 1; atypical spans 94–128; it reads EEVRQFRRLFAQLAGDDMEVSATELMNILNKVVTR. 10 residues coordinate Ca(2+): Ala-107, Asp-110, Glu-112, Glu-117, Asp-135, Asp-150, Asp-152, Thr-154, Lys-156, and Glu-161. EF-hand domains follow at residues 137 to 170, 167 to 202, 203 to 231, and 232 to 266; these read FGIDTCRSMVAVMDSDTTGKLGFEEFKYLWNNIK, NNIKKWQAIYKQFDVDRSGTIGSSELPGAFEAAGFH, LNEHLYSMIIRRYSDEGGNMDFDNFISCL, and VRLDAMFRAFKSLDKDGTGQIQVNIQEWLQLTMYS. N6-acetyllysine is present on Lys-177. Asp-180, Asp-182, Ser-184, Thr-186, Glu-191, and Asp-223 together coordinate Ca(2+).

In terms of assembly, homodimer or heterodimer of a large (catalytic) and a small (regulatory) subunit. In presence of calcium, the heterodimer dissociates.

The protein localises to the cytoplasm. It localises to the cell membrane. In terms of biological role, regulatory subunit of the calcium-regulated non-lysosomal thiol-protease which catalyzes limited proteolysis of substrates involved in cytoskeletal remodeling and signal transduction. Essential for embryonic development. The sequence is that of Calpain small subunit 1 (CAPNS1) from Sus scrofa (Pig).